Consider the following 347-residue polypeptide: Holliday junction branch migration complex subunit RuvB (347 aa).

Residues 1-186 are large ATPase domain (RuvB-L); it reads MKDENSINFL…FGITARFELY (186 aa). ATP contacts are provided by residues Leu-25, Arg-26, Gly-67, Lys-70, Thr-71, Thr-72, 133–135, Arg-176, Tyr-186, and Arg-223; that span reads EDY. Residue Thr-71 coordinates Mg(2+). A small ATPAse domain (RuvB-S) region spans residues 187–257; it reads SEIELVEIIK…IVAIGLEMLR (71 aa). The tract at residues 260-347 is head domain (RuvB-H); that stretch reads GEGLDEQDRN…NLNENQRVSF (88 aa). 2 residues coordinate DNA: Arg-315 and Arg-320.

The protein belongs to the RuvB family. Homohexamer. Forms an RuvA(8)-RuvB(12)-Holliday junction (HJ) complex. HJ DNA is sandwiched between 2 RuvA tetramers; dsDNA enters through RuvA and exits via RuvB. An RuvB hexamer assembles on each DNA strand where it exits the tetramer. Each RuvB hexamer is contacted by two RuvA subunits (via domain III) on 2 adjacent RuvB subunits; this complex drives branch migration. In the full resolvosome a probable DNA-RuvA(4)-RuvB(12)-RuvC(2) complex forms which resolves the HJ.

Its subcellular location is the cytoplasm. It carries out the reaction ATP + H2O = ADP + phosphate + H(+). The RuvA-RuvB-RuvC complex processes Holliday junction (HJ) DNA during genetic recombination and DNA repair, while the RuvA-RuvB complex plays an important role in the rescue of blocked DNA replication forks via replication fork reversal (RFR). RuvA specifically binds to HJ cruciform DNA, conferring on it an open structure. The RuvB hexamer acts as an ATP-dependent pump, pulling dsDNA into and through the RuvAB complex. RuvB forms 2 homohexamers on either side of HJ DNA bound by 1 or 2 RuvA tetramers; 4 subunits per hexamer contact DNA at a time. Coordinated motions by a converter formed by DNA-disengaged RuvB subunits stimulates ATP hydrolysis and nucleotide exchange. Immobilization of the converter enables RuvB to convert the ATP-contained energy into a lever motion, pulling 2 nucleotides of DNA out of the RuvA tetramer per ATP hydrolyzed, thus driving DNA branch migration. The RuvB motors rotate together with the DNA substrate, which together with the progressing nucleotide cycle form the mechanistic basis for DNA recombination by continuous HJ branch migration. Branch migration allows RuvC to scan DNA until it finds its consensus sequence, where it cleaves and resolves cruciform DNA. The sequence is that of Holliday junction branch migration complex subunit RuvB from Borreliella afzelii (strain PKo) (Borrelia afzelii).